A 198-amino-acid polypeptide reads, in one-letter code: Protein GrpE (198 aa).

The span at 1 to 14 (MSNEENKINEEALK) shows a compositional bias: basic and acidic residues. The interval 1–20 (MSNEENKINEEALKQQDAAE) is disordered.

It belongs to the GrpE family. In terms of assembly, homodimer.

It localises to the cytoplasm. Its function is as follows. Participates actively in the response to hyperosmotic and heat shock by preventing the aggregation of stress-denatured proteins, in association with DnaK and GrpE. It is the nucleotide exchange factor for DnaK and may function as a thermosensor. Unfolded proteins bind initially to DnaJ; upon interaction with the DnaJ-bound protein, DnaK hydrolyzes its bound ATP, resulting in the formation of a stable complex. GrpE releases ADP from DnaK; ATP binding to DnaK triggers the release of the substrate protein, thus completing the reaction cycle. Several rounds of ATP-dependent interactions between DnaJ, DnaK and GrpE are required for fully efficient folding. In Vibrio vulnificus (strain YJ016), this protein is Protein GrpE.